Consider the following 65-residue polypeptide: Hirudin-2' (65 aa).

The segment at 1–3 (ITY) is interaction with thrombin active site. 3 cysteine pairs are disulfide-bonded: Cys-6–Cys-14, Cys-16–Cys-28, and Cys-22–Cys-39. Positions 39 to 65 (CVTGEGTPKPQSHNDGDFEEIPEEYLQ) are disordered. Residue Thr-45 is glycosylated (O-linked (GalNAc...) threonine). Residues 55–65 (DFEEIPEEYLQ) are interaction with fibrinogen-binding exosite of thrombin. A compositionally biased stretch (acidic residues) spans 55–65 (DFEEIPEEYLQ). Tyr-63 carries the sulfotyrosine modification.

Belongs to the protease inhibitor I14 (hirudin) family.

The protein localises to the secreted. Hirudin is a potent thrombin-specific protease inhibitor. It forms a stable non-covalent complex with alpha-thrombin, thereby abolishing its ability to cleave fibrinogen. The polypeptide is Hirudin-2' (Hirudo medicinalis (Medicinal leech)).